Reading from the N-terminus, the 657-residue chain is Threonine--tRNA ligase (657 aa).

Residues 7 to 70 enclose the TGS domain; that stretch reads ILAVIALTLP…TADAAIEIIT (64 aa). The catalytic stretch occupies residues 253–555; it reads DHRKLGAELE…LIEHTAGNFP (303 aa). Zn(2+) contacts are provided by cysteine 351, histidine 402, and histidine 532.

Belongs to the class-II aminoacyl-tRNA synthetase family. As to quaternary structure, homodimer. Requires Zn(2+) as cofactor.

It localises to the cytoplasm. It catalyses the reaction tRNA(Thr) + L-threonine + ATP = L-threonyl-tRNA(Thr) + AMP + diphosphate + H(+). Functionally, catalyzes the attachment of threonine to tRNA(Thr) in a two-step reaction: L-threonine is first activated by ATP to form Thr-AMP and then transferred to the acceptor end of tRNA(Thr). Also edits incorrectly charged L-seryl-tRNA(Thr). This chain is Threonine--tRNA ligase, found in Pelodictyon phaeoclathratiforme (strain DSM 5477 / BU-1).